The chain runs to 156 residues: Oxidized purine nucleoside triphosphate hydrolase (156 aa).

Positions 3–132 constitute a Nudix hydrolase domain; the sequence is TSRLYTLVLV…WFPLLLQKKK (130 aa). A 2-oxo-dATP-binding site is contributed by Thr-8. Residue Lys-23 coordinates 8-oxo-dGTP. Residues Asn-33 and 35-38 contribute to the 2-oxo-dATP site; that span reads FGGK. The Mg(2+) site is built by Gly-36, Glu-52, Glu-55, Glu-56, and Glu-100. The Nudix box motif lies at 37 to 58; it reads GKVQEGETIEDGAKRELREESG. 117–120 is a binding site for 2-oxo-dATP; sequence WPDD.

This sequence belongs to the Nudix hydrolase family. As to quaternary structure, monomer. The cofactor is Mg(2+).

The protein resides in the cytoplasm. The protein localises to the nucleus. It localises to the nucleus membrane. Its subcellular location is the cytoplasmic vesicle. It is found in the secretory vesicle. The protein resides in the acrosome. The enzyme catalyses 2-oxo-dATP + H2O = 2-oxo-dAMP + diphosphate + H(+). The catalysed reaction is 2-oxo-ATP + H2O = 2-oxo-AMP + diphosphate + H(+). It catalyses the reaction 8-oxo-dGTP + H2O = 8-oxo-dGMP + diphosphate + H(+). It carries out the reaction 8-oxo-dATP + H2O = 8-oxo-dAMP + diphosphate + H(+). The enzyme catalyses O(6)-methyl-dGTP + H2O = O(6)-methyl-dGMP + diphosphate + H(+). The catalysed reaction is N(6)-methyl-dATP + H2O = N(6)-methyl-dAMP + diphosphate + H(+). It catalyses the reaction N(6)-methyl-ATP + H2O = N(6)-methyl-AMP + diphosphate + H(+). Functionally, oxidized purine nucleoside triphosphate hydrolase which is a prominent sanitizer of the oxidized nucleotide pool. Catalyzes the hydrolysis of 2-oxo-dATP (2-hydroxy-dATP) into 2-oxo-dAMP. Also has a significant hydrolase activity toward 2-oxo-ATP, 8-oxo-dGTP and 8-oxo-dATP. Through the hydrolysis of oxidized purine nucleoside triphosphates, prevents their incorporation into DNA and the subsequent transversions A:T to C:G and G:C to T:A. Also catalyzes the hydrolysis of methylated purine nucleoside triphosphate preventing their integration into DNA. Through this antimutagenic activity protects cells from oxidative stress. This Canis lupus familiaris (Dog) protein is Oxidized purine nucleoside triphosphate hydrolase (NUDT1).